The chain runs to 233 residues: Small ribosomal subunit protein uS2c (233 aa).

Belongs to the universal ribosomal protein uS2 family.

The protein localises to the plastid. Its subcellular location is the chloroplast. The chain is Small ribosomal subunit protein uS2c (rps2) from Galdieria sulphuraria (Red alga).